The primary structure comprises 388 residues: 3-oxo-tetronate kinase (388 aa).

ATP is bound by residues S258 and 360–363 (GGET).

It belongs to the four-carbon acid sugar kinase family.

The enzyme catalyses 3-dehydro-L-erythronate + ATP = 3-dehydro-4-O-phospho-L-erythronate + ADP + H(+). It carries out the reaction 3-dehydro-D-erythronate + ATP = 3-dehydro-4-O-phospho-D-erythronate + ADP + H(+). Its function is as follows. Catalyzes the ATP-dependent phosphorylation of 3-oxo-tetronate to 3-oxo-tetronate 4-phosphate. The sequence is that of 3-oxo-tetronate kinase from Escherichia coli (strain K12).